A 526-amino-acid polypeptide reads, in one-letter code: GMP synthase [glutamine-hydrolyzing] (526 aa).

Residues 4–202 (KILILDFGSQ…VHDICGCDQS (199 aa)) enclose the Glutamine amidotransferase type-1 domain. Residue Cys-81 is the Nucleophile of the active site. Active-site residues include His-176 and Glu-178. In terms of domain architecture, GMPS ATP-PPase spans 203-395 (WNMPDYVETA…LGLPHDMVYR (193 aa)). 230 to 236 (SGGVDSS) lines the ATP pocket.

In terms of assembly, homodimer.

It carries out the reaction XMP + L-glutamine + ATP + H2O = GMP + L-glutamate + AMP + diphosphate + 2 H(+). The protein operates within purine metabolism; GMP biosynthesis; GMP from XMP (L-Gln route): step 1/1. Its function is as follows. Catalyzes the synthesis of GMP from XMP. The polypeptide is GMP synthase [glutamine-hydrolyzing] (Methylobacillus flagellatus (strain ATCC 51484 / DSM 6875 / VKM B-1610 / KT)).